The following is a 157-amino-acid chain: Protein Smg homolog (157 aa).

This sequence belongs to the Smg family.

The polypeptide is Protein Smg homolog (Xanthomonas campestris pv. campestris (strain 8004)).